Reading from the N-terminus, the 440-residue chain is Tyrosine--tRNA ligase (440 aa).

Residue tyrosine 46 participates in L-tyrosine binding. Residues 51-60 (PTAASLHIGN) carry the 'HIGH' region motif. Residues tyrosine 181 and glutamine 185 each coordinate L-tyrosine. The 'KMSKS' region signature appears at 241 to 245 (KFGKS). Lysine 244 lines the ATP pocket. Residues 373–439 (DRVIDAAQAA…GKKALGAVEN (67 aa)) form the S4 RNA-binding domain.

Belongs to the class-I aminoacyl-tRNA synthetase family. TyrS type 1 subfamily. In terms of assembly, homodimer.

It localises to the cytoplasm. The catalysed reaction is tRNA(Tyr) + L-tyrosine + ATP = L-tyrosyl-tRNA(Tyr) + AMP + diphosphate + H(+). Functionally, catalyzes the attachment of tyrosine to tRNA(Tyr) in a two-step reaction: tyrosine is first activated by ATP to form Tyr-AMP and then transferred to the acceptor end of tRNA(Tyr). This is Tyrosine--tRNA ligase from Bifidobacterium longum subsp. infantis (strain ATCC 15697 / DSM 20088 / JCM 1222 / NCTC 11817 / S12).